The chain runs to 224 residues: PKHD-type hydroxylase HNE_1625 (224 aa).

In terms of domain architecture, Fe2OG dioxygenase spans 77-175; it reads KFAPPLISCS…RFVFVGWIQS (99 aa). Fe cation is bound by residues His95, Asp97, and His156. Arg166 contacts 2-oxoglutarate.

It depends on Fe(2+) as a cofactor. L-ascorbate is required as a cofactor.

The sequence is that of PKHD-type hydroxylase HNE_1625 from Hyphomonas neptunium (strain ATCC 15444).